The chain runs to 421 residues: UDP-N-acetylglucosamine 1-carboxyvinyltransferase (421 aa).

23-24 (KN) is a phosphoenolpyruvate binding site. A UDP-N-acetyl-alpha-D-glucosamine-binding site is contributed by arginine 92. The active-site Proton donor is the cysteine 116. At cysteine 116 the chain carries 2-(S-cysteinyl)pyruvic acid O-phosphothioketal. UDP-N-acetyl-alpha-D-glucosamine contacts are provided by residues 121 to 125 (RPVDL), 161 to 164 (KVSV), aspartate 306, and isoleucine 328.

This sequence belongs to the EPSP synthase family. MurA subfamily.

The protein localises to the cytoplasm. It catalyses the reaction phosphoenolpyruvate + UDP-N-acetyl-alpha-D-glucosamine = UDP-N-acetyl-3-O-(1-carboxyvinyl)-alpha-D-glucosamine + phosphate. It functions in the pathway cell wall biogenesis; peptidoglycan biosynthesis. Cell wall formation. Adds enolpyruvyl to UDP-N-acetylglucosamine. The chain is UDP-N-acetylglucosamine 1-carboxyvinyltransferase from Vibrio campbellii (strain ATCC BAA-1116).